The sequence spans 708 residues: Pre-mRNA-splicing factor SPP382 (708 aa).

A G-patch domain is found at 61-108 (TYGIGAKLLSSMGYVAGKGLGKDGSGITTPIETQSRPMHNAGLGMFSN).

In terms of assembly, component of the NTR complex (NTC-related complex), composed of NTR1, NTR2 and PRP43. Interacts with CLF1 and NTR2. Interacts with PRP43 and PRP45.

It localises to the cytoplasm. The protein resides in the nucleus. Functionally, involved in pre-mRNA splicing and spliceosome disassembly. Promotes release of excised lariat intron from the spliceosome by acting as a receptor for PRP43. This targeting of PRP43 leads to disassembly of the spliceosome with the separation of the U2, U5, U6 snRNPs and the NTC complex. The chain is Pre-mRNA-splicing factor SPP382 (SPP382) from Saccharomyces cerevisiae (strain ATCC 204508 / S288c) (Baker's yeast).